Reading from the N-terminus, the 391-residue chain is GATA-binding factor 6-A (391 aa).

The interval 57 to 111 (GAHSVNSHWSQATSESSSFNNSSPHTSSRYHYPPSPPMHNGSTRDTGYSSSLTVS) is disordered. Residues 66 to 83 (SQATSESSSFNNSSPHTS) show a composition bias toward low complexity. A compositionally biased stretch (polar residues) spans 96–111 (NGSTRDTGYSSSLTVS). 2 consecutive GATA-type zinc fingers follow at residues 182-206 (CVNC…CNAC) and 236-260 (CANC…CNAC). Residues 274 to 355 (AMKKEGIQTR…TESTSPNSNT (82 aa)) are disordered. Residues 282–291 (TRKRKPKTLN) are compositionally biased toward basic residues. Positions 292-319 (KSKSSSSNGNSSHQISMTPTSTTSSTNS) are enriched in low complexity. Over residues 326–355 (GSPSQNTTPVVASSLMSTQQTESTSPNSNT) the composition is skewed to polar residues.

In embryos, expressed in the presumptive heart mesoderm. In adults, expressed at high levels in heart, small intestine, and stomach and at lower levels in lung, pancreas and colon.

It localises to the nucleus. Transcriptional activator that binds 5'-GATA-3'-containing motifs within gene promoters. Regulates cardiac-specific transcription during embryogenesis and thereby cardiogenesis. The sequence is that of GATA-binding factor 6-A (gata6-a) from Xenopus laevis (African clawed frog).